Reading from the N-terminus, the 258-residue chain is Isoprenyl transferase 2 (258 aa).

Residue Asp39 is part of the active site. Asp39 contributes to the Mg(2+) binding site. Residues 40–43 (GNRR), Trp44, Arg52, His57, and 85–87 (SND) each bind substrate. The Proton acceptor role is filled by Asn88. Residues Arg92, Arg207, and 213–215 (RLS) contribute to the substrate site. Glu226 is a binding site for Mg(2+).

Belongs to the UPP synthase family. Homodimer. Mg(2+) serves as cofactor.

Its function is as follows. Catalyzes the condensation of isopentenyl diphosphate (IPP) with allylic pyrophosphates generating different type of terpenoids. This Tropheryma whipplei (strain Twist) (Whipple's bacillus) protein is Isoprenyl transferase 2.